Here is a 396-residue protein sequence, read N- to C-terminus: ATP phosphoribosyltransferase regulatory subunit (396 aa).

The protein belongs to the class-II aminoacyl-tRNA synthetase family. HisZ subfamily. As to quaternary structure, heteromultimer composed of HisG and HisZ subunits.

It localises to the cytoplasm. Its pathway is amino-acid biosynthesis; L-histidine biosynthesis; L-histidine from 5-phospho-alpha-D-ribose 1-diphosphate: step 1/9. In terms of biological role, required for the first step of histidine biosynthesis. May allow the feedback regulation of ATP phosphoribosyltransferase activity by histidine. This is ATP phosphoribosyltransferase regulatory subunit from Alkaliphilus metalliredigens (strain QYMF).